The chain runs to 37 residues: Mu-agatoxin-Aa1e (37 aa).

Disulfide bonds link C2–C18, C9–C23, C17–C33, and C25–C31. N37 bears the Asparagine amide mark.

Belongs to the neurotoxin 07 (Beta/delta-agtx) family. 03 (aga-4) subfamily. Aga sub-subfamily. As to expression, expressed by the venom gland.

The protein localises to the secreted. Insecticidal neurotoxin that induces an irreversible spastic paralysis when injected into insects. Modifies presynaptic voltage-gated sodium channels (Nav), causing them to open at the normal resting potential of the nerve. This leads to spontaneous release of neurotransmitter and repetitive action potentials in motor neurons. In Agelenopsis aperta (North American funnel-web spider), this protein is Mu-agatoxin-Aa1e.